The chain runs to 147 residues: uncharacterized protein (147 aa).

A helical transmembrane segment spans residues 71–91; it reads IDILAFVAGTVGVGSLVLLQF.

It is found in the virion. Its subcellular location is the host membrane. This is an uncharacterized protein from Acanthamoeba polyphaga mimivirus (APMV).